We begin with the raw amino-acid sequence, 84 residues long: Exodeoxyribonuclease 7 small subunit (84 aa).

This sequence belongs to the XseB family. Heterooligomer composed of large and small subunits.

The protein localises to the cytoplasm. The enzyme catalyses Exonucleolytic cleavage in either 5'- to 3'- or 3'- to 5'-direction to yield nucleoside 5'-phosphates.. Functionally, bidirectionally degrades single-stranded DNA into large acid-insoluble oligonucleotides, which are then degraded further into small acid-soluble oligonucleotides. The polypeptide is Exodeoxyribonuclease 7 small subunit (Haemophilus influenzae (strain 86-028NP)).